A 1761-amino-acid polypeptide reads, in one-letter code: 6-methylsalicylic acid synthase AOL_s00215g283 (1761 aa).

The region spanning 18-443 (QDDIAIIGMA…GTVAHAVIEQ (426 aa)) is the Ketosynthase family 3 (KS3) domain. Residues Cys-190, His-325, and His-367 each act as for beta-ketoacyl synthase activity in the active site. The interval 554–870 (VWVFSGHGAH…ALGKLHCHGA (317 aa)) is malonyl-CoA:ACP transacylase (MAT) domain. Residue Ser-641 is the For malonyltransferase activity of the active site. Residues 918 to 1038 (HVLLGAKHQV…GHVANNEWSK (121 aa)) form an N-terminal hotdog fold region. Residues 918 to 1187 (HVLLGAKHQV…NGMRFSAVEG (270 aa)) form a dehydratase (DH) domain region. Residues 918-1191 (HVLLGAKHQV…FSAVEGTPGA (274 aa)) form the PKS/mFAS DH domain. Catalysis depends on His-950, which acts as the Proton acceptor; for dehydratase activity. Residues 1050 to 1191 (LPSVKPSFAT…FSAVEGTPGA (142 aa)) form a C-terminal hotdog fold region. The active-site Proton donor; for dehydratase activity is Asp-1113. The interval 1399-1587 (GTYLITGGLG…IVSFLWTSWN (189 aa)) is ketoreductase (KR) domain. The disordered stretch occupies residues 1654 to 1680 (PRKRAESSGTEAVSKGEVSEKAPVPKS). One can recognise a Carrier domain in the interval 1686–1761 (EYLQNAISEC…HLVKWFEEKI (76 aa)). Ser-1721 bears the O-(pantetheine 4'-phosphoryl)serine mark.

It catalyses the reaction 3 malonyl-CoA + acetyl-CoA + NADPH + 3 H(+) = 6-methylsalicylate + 3 CO2 + NADP(+) + 4 CoA + H2O. It functions in the pathway secondary metabolite biosynthesis; terpenoid biosynthesis. In terms of biological role, 6-methylsalicylic acid synthase; part of the gene cluster that mediates the biosynthesis of sesquiterpenyl epoxy-cyclohexenoids (SECs) such as anthrobotrisins and arthrosporols, metabolites that possess a novel hybrid carbon skeleton consisting of a polyketide-derived epoxycyclohexenol combined with a terpenoid-derived monocyclic sesquiterpenol substructure (PKS-PTS hybrid). The SEC pathway plays an important role for fungal soil colonization via decreasing fungal nematode-capturing ability. Within the pathway, the polyketide synthase (PKS) AOL_s00215g283 catalyzes the biosynthesis of 6-methylsalicylic acid (6-MSA) via condensation of 1 acetate and 3 malonate units. AOL_s00215g283 performs a series of programmed reactions including Claisen condensation, dehydration, reduction, and cyclization to yield 6-MSA. The pathway begins with the biosynthesis of 6-methylsalicylic acid (6-MSA), the first precursor of the polyketide-derived epoxycyclohexenol in arthrosporols, by the polyketide synthase (PKS) AOL_s00215g283. The 6-methylsalicylic acid decarboxylase AOL_s00215g281 then catalyzes the decarboxylation of 6-methylsalicylic acid to yield m-cresol. The cytochrome P450 monooxygenase AOL_s00215g282 further oxidizes m-cresol to yield toluquinol. With the assistance of the oxidoreductase AOL_s00215g277, the polyprenyl transferase AOL_s00215g276 catalyzes the farnesylation of toluquinol to produce farnesyl hydroquinone, the hybrid precursor for biosynthesis of SECs. Farnesyl hydroquinone undergoes epoxidation and then subsequent dehydrogenation to form farnesyl epoxy-quinone, the first and simplest SEC. The cytochrome P450 monooxygenase AOL_s00215g278 and the FAD-dependent monooxygenase AOL_s00215g279 might be involved in the oxygenation of the phenol moiety, most likely in the epoxy formation. The cytochrome P450 monooxygenases AOL_s00215g274 and AOL_s00215g280 are involved in specific regional ketone reductions at respectively C-4 and C-1 of farnesyl epoxy-quinone PubMed:33823587. This chain is 6-methylsalicylic acid synthase AOL_s00215g283, found in Arthrobotrys oligospora (strain ATCC 24927 / CBS 115.81 / DSM 1491) (Nematode-trapping fungus).